A 130-amino-acid chain; its full sequence is uncharacterized protein (130 aa).

This is an uncharacterized protein from Pyrococcus horikoshii (strain ATCC 700860 / DSM 12428 / JCM 9974 / NBRC 100139 / OT-3).